The sequence spans 1929 residues: Intraflagellar transport protein 140 (1929 aa).

WD repeat units lie at residues 76–116 (QVQV…PSYK) and 119–158 (LHQE…YSFE). Residues 774–795 (LSTPDTGSPAVEAEESPQRQTR) form a disordered region. 3 LRR repeats span residues 957–980 (STSL…TFTK), 1019–1044 (ISLL…SLAE), and 1510–1532 (AQSL…LADI).

The protein localises to the cell projection. The protein resides in the cilium. It is found in the flagellum. Its subcellular location is the cytoplasm. It localises to the cytoskeleton. The protein localises to the flagellum axoneme. The protein resides in the flagellum basal body. Its function is as follows. Component of the intraflagellar transport complex A (IFT-A) involved in flagellar assembly. This Giardia intestinalis (strain ATCC 50803 / WB clone C6) (Giardia lamblia) protein is Intraflagellar transport protein 140.